A 499-amino-acid polypeptide reads, in one-letter code: Glycerol kinase (499 aa).

Residue Thr-13 participates in ADP binding. ATP contacts are provided by Thr-13, Thr-14, and Ser-15. Residue Thr-13 coordinates sn-glycerol 3-phosphate. Arg-17 provides a ligand contact to ADP. Residues Arg-83, Glu-84, Tyr-136, and Asp-246 each coordinate sn-glycerol 3-phosphate. 5 residues coordinate glycerol: Arg-83, Glu-84, Tyr-136, Asp-246, and Gln-247. The ADP site is built by Thr-268 and Gly-311. ATP contacts are provided by Thr-268, Gly-311, Gln-315, and Gly-412. Residues Gly-412 and Asn-416 each coordinate ADP.

Belongs to the FGGY kinase family.

It carries out the reaction glycerol + ATP = sn-glycerol 3-phosphate + ADP + H(+). It participates in polyol metabolism; glycerol degradation via glycerol kinase pathway; sn-glycerol 3-phosphate from glycerol: step 1/1. With respect to regulation, inhibited by fructose 1,6-bisphosphate (FBP). Key enzyme in the regulation of glycerol uptake and metabolism. Catalyzes the phosphorylation of glycerol to yield sn-glycerol 3-phosphate. In Francisella philomiragia subsp. philomiragia (strain ATCC 25017 / CCUG 19701 / FSC 153 / O#319-036), this protein is Glycerol kinase.